A 289-amino-acid polypeptide reads, in one-letter code: ATP phosphoribosyltransferase (289 aa).

Belongs to the ATP phosphoribosyltransferase family. Long subfamily. Mg(2+) is required as a cofactor.

It is found in the cytoplasm. The catalysed reaction is 1-(5-phospho-beta-D-ribosyl)-ATP + diphosphate = 5-phospho-alpha-D-ribose 1-diphosphate + ATP. It participates in amino-acid biosynthesis; L-histidine biosynthesis; L-histidine from 5-phospho-alpha-D-ribose 1-diphosphate: step 1/9. Feedback inhibited by histidine. Its function is as follows. Catalyzes the condensation of ATP and 5-phosphoribose 1-diphosphate to form N'-(5'-phosphoribosyl)-ATP (PR-ATP). Has a crucial role in the pathway because the rate of histidine biosynthesis seems to be controlled primarily by regulation of HisG enzymatic activity. This is ATP phosphoribosyltransferase from Desulforudis audaxviator (strain MP104C).